Consider the following 435-residue polypeptide: Tol-Pal system protein TolB (435 aa).

An N-terminal signal peptide occupies residues 1-26; sequence MKIFSPIRLVLAIAALMSVFSAPAFA.

The protein belongs to the TolB family. The Tol-Pal system is composed of five core proteins: the inner membrane proteins TolA, TolQ and TolR, the periplasmic protein TolB and the outer membrane protein Pal. They form a network linking the inner and outer membranes and the peptidoglycan layer.

Its subcellular location is the periplasm. Part of the Tol-Pal system, which plays a role in outer membrane invagination during cell division and is important for maintaining outer membrane integrity. The sequence is that of Tol-Pal system protein TolB from Agrobacterium fabrum (strain C58 / ATCC 33970) (Agrobacterium tumefaciens (strain C58)).